The chain runs to 374 residues: N-acetyldiaminopimelate deacetylase (374 aa).

Asp69 is an active-site residue. Glu128 (proton acceptor) is an active-site residue.

Belongs to the peptidase M20A family. N-acetyldiaminopimelate deacetylase subfamily.

It carries out the reaction N-acetyl-(2S,6S)-2,6-diaminopimelate + H2O = (2S,6S)-2,6-diaminopimelate + acetate. It functions in the pathway amino-acid biosynthesis; L-lysine biosynthesis via DAP pathway; LL-2,6-diaminopimelate from (S)-tetrahydrodipicolinate (acetylase route): step 3/3. Functionally, catalyzes the conversion of N-acetyl-diaminopimelate to diaminopimelate and acetate. This is N-acetyldiaminopimelate deacetylase from Bacillus velezensis (strain DSM 23117 / BGSC 10A6 / LMG 26770 / FZB42) (Bacillus amyloliquefaciens subsp. plantarum).